The sequence spans 169 residues: Neurotensin/neuromedin N (169 aa).

The N-terminal stretch at Met1–Cys22 is a signal peptide.

It belongs to the neurotensin family. Interacts with NTSR1. Interacts with SORT1. Interacts with SORL1. Post-translationally, neurotensin is cleaved and degraded by Angiotensin-converting enzyme (ACE) and neprilysin (MME).

The protein resides in the secreted. It localises to the cytoplasmic vesicle. It is found in the secretory vesicle. Functionally, neurotensin may play an endocrine or paracrine role in the regulation of fat metabolism. It causes contraction of smooth muscle. This is Neurotensin/neuromedin N (Nts) from Rattus norvegicus (Rat).